Here is a 298-residue protein sequence, read N- to C-terminus: MGHIINPISYRLYNIRYWNNNWFSGSLNYSYLINQDILIDRFFRKFLTTHLDSTNAGIIFVNLKIIRSFNNISLYVYIHDSFLDLLFFNLKKNARFLLIKRLFNKKFYKKYRKALRQNKQLKQGLFMLLKKRVILRYSRKLFFLFIKNKILKIYWESFKTLSLFYLKRFSRSSFLSKIFIIGLSKMNVNANIISEFFFIRLTQYYTIWEVLRNINFLFKSLMKKRKLVKGYKITCSGRFSRKQRTTYSWKAFGSLAFSTVKSKLDYSYKTIALKYSSCTIKVWVRLGKKKSNLVDFVV.

This sequence belongs to the universal ribosomal protein uS3 family.

Its subcellular location is the mitochondrion. The sequence is that of Small ribosomal subunit protein uS3m (RPS3) from Acanthamoeba castellanii (Amoeba).